The sequence spans 527 residues: Probable glucomannan 4-beta-mannosyltransferase 9 (527 aa).

A helical transmembrane segment spans residues 37-59 (AMSVMLFVEKVYMSVVLVGVHLF). Asp131 is an active-site residue. Positions 190 and 192 each coordinate substrate. Residue Asp284 is part of the active site. A run of 4 helical transmembrane segments spans residues 363-383 (IIGH…TVLI), 399-419 (IVTI…IFWV), 478-498 (ALEL…IAYG), and 505-525 (FLFL…GTIV).

Belongs to the glycosyltransferase 2 family. Plant cellulose synthase-like A subfamily.

The protein localises to the golgi apparatus membrane. It carries out the reaction GDP-mannose + (glucomannan)n = GDP + (glucomannan)n+1.. Its function is as follows. Probable mannan synthase which consists of a 4-beta-mannosyltransferase activity on mannan using GDP-mannose. The beta-1,4-mannan product is the backbone for galactomannan synthesis by galactomannan galactosyltransferase. Galactomannan is a noncellulosic polysaccharides of plant cell wall. This chain is Probable glucomannan 4-beta-mannosyltransferase 9, found in Oryza sativa subsp. japonica (Rice).